The chain runs to 469 residues: Asparagine--tRNA ligase (469 aa).

The protein belongs to the class-II aminoacyl-tRNA synthetase family. In terms of assembly, homodimer.

It is found in the cytoplasm. The enzyme catalyses tRNA(Asn) + L-asparagine + ATP = L-asparaginyl-tRNA(Asn) + AMP + diphosphate + H(+). This is Asparagine--tRNA ligase from Porphyromonas gingivalis (strain ATCC BAA-308 / W83).